The following is an 81-amino-acid chain: Conotoxin ViKr92 (81 aa).

The N-terminal stretch at 1–22 is a signal peptide; it reads MKLTWMMIVAVLFLTAWTFVTA. A propeptide spanning residues 23–51 is cleaved from the precursor; sequence DDTRYKLENPFLKARNELQKLEASQLNER. Disulfide bonds link cysteine 53/cysteine 70, cysteine 60/cysteine 74, and cysteine 69/cysteine 78.

The protein belongs to the conotoxin O1 superfamily. In terms of tissue distribution, expressed by the venom duct.

The protein resides in the secreted. The protein is Conotoxin ViKr92 of Conus virgo (Virgin cone).